Here is a 402-residue protein sequence, read N- to C-terminus: Guanine nucleotide-binding protein subunit alpha-1 (402 aa).

Over residues 1-12 (MGCSASKPSEPS) the composition is skewed to polar residues. Positions 1–70 (MGCSASKPSE…PEPQKPAEPA (70 aa)) are disordered. A lipid anchor (N-myristoyl glycine) is attached at glycine 2. Cysteine 3 is lipidated: S-palmitoyl cysteine. Over residues 23–33 (KKVEQVPEPKP) the composition is skewed to basic and acidic residues. Residues 34-69 (EPQPQPEPQPQPEPPKPAEPAPAPAPAPEPQKPAEP) show a composition bias toward pro residues. The region spanning 82-402 (EAYGLLLCGA…FISDKYYQDA (321 aa)) is the G-alpha domain. Residues 85–98 (GLLLCGAGESGKTT) form a G1 motif region. GTP contacts are provided by glutamate 93, serine 94, glycine 95, lysine 96, threonine 97, threonine 98, aspartate 198, leucine 223, serine 229, glycine 251, asparagine 317, lysine 318, aspartate 320, and alanine 377. Threonine 97 provides a ligand contact to Mg(2+). Positions 221–229 (DVLRARIRS) are G2 motif. Residue serine 229 participates in Mg(2+) binding. The tract at residues 244–253 (IRIFDVGGQK) is G3 motif. The tract at residues 313–320 (FLVCNKFD) is G4 motif. The segment at 375–380 (IVALNG) is G5 motif.

The protein belongs to the G-alpha family. In terms of assembly, g proteins are composed of 3 units; alpha, beta and gamma. The alpha chain contains the guanine nucleotide binding site. The cofactor is Mg(2+).

Its subcellular location is the cytoplasm. It is found in the perinuclear region. The protein localises to the endomembrane system. Its function is as follows. Guanine nucleotide-binding proteins (G proteins) are involved as modulators or transducers in various transmembrane signaling systems. The sequence is that of Guanine nucleotide-binding protein subunit alpha-1 (GA1) from Trichomonas vaginalis.